Here is a 98-residue protein sequence, read N- to C-terminus: MNKHFLLLFSLFYFIVEATSLKCVTCHLRTQSDHCRRGFGVCLAQKHEICMSLRIYFSGSLQLSYMVCQRFCKNLTYIFNNRTYTHKCCNSDFCNFRL.

An N-terminal signal peptide occupies residues 1-20 (MNKHFLLLFSLFYFIVEATS). In terms of domain architecture, UPAR/Ly6 spans 21-97 (LKCVTCHLRT…CCNSDFCNFR (77 aa)). Intrachain disulfides connect C23–C50, C26–C35, C42–C68, and C72–C88.

Belongs to the PATE family.

The protein resides in the secreted. The sequence is that of Prostate and testis expressed protein 3 (Pate3) from Mus musculus (Mouse).